We begin with the raw amino-acid sequence, 1098 residues long: Platelet-derived growth factor receptor beta (1098 aa).

Residues 1–31 (MGLPGVIPALVLRGQLLLSVLWLLGPQTSRG) form the signal peptide. Over 32–531 (LVITPPGPEF…VVPHSLPFKV (500 aa)) the chain is Extracellular. 5 Ig-like C2-type domains span residues 33–119 (VITP…YIFV), 128–209 (PMDS…YSLQ), 213–308 (INVS…INIS), 330–402 (HRSR…HEDD), and 415–523 (PVRV…VTVV). Asn-44, Asn-88, and Asn-102 each carry an N-linked (GlcNAc...) asparagine glycan. The cysteines at positions 53 and 99 are disulfide-linked. Cys-148 and Cys-189 are disulfide-bonded. An N-linked (GlcNAc...) asparagine glycan is attached at Asn-214. A disulfide bridge links Cys-234 with Cys-290. N-linked (GlcNAc...) asparagine glycans are attached at residues Asn-291, Asn-306, Asn-353, Asn-370, Asn-444, Asn-467, and Asn-478. The cysteines at positions 435 and 507 are disulfide-linked. Residues 532–552 (VVISAILALVVLTVISLIILI) form a helical membrane-spanning segment. At 553 to 1098 (MLWQKKPRYE…PLAEAEDSFL (546 aa)) the chain is on the cytoplasmic side. Tyr-561, Tyr-578, and Tyr-580 each carry phosphotyrosine; by autocatalysis. The Protein kinase domain occupies 599–961 (LVLGRTLGSG…QLVLLLERLL (363 aa)). ATP is bound by residues 605 to 613 (LGSGAFGQV) and Lys-633. The residue at position 685 (Tyr-685) is a Phosphotyrosine; by ABL1 and ABL2. Phosphotyrosine; by autocatalysis is present on residues Tyr-715, Tyr-739, Tyr-750, Tyr-762, Tyr-770, Tyr-774, and Tyr-777. The active-site Proton acceptor is Asp-825. Position 856 is a phosphotyrosine; by autocatalysis (Tyr-856). Residues Tyr-933 and Tyr-969 each carry the phosphotyrosine; by ABL1 and ABL2 modification. A phosphotyrosine; by autocatalysis mark is found at Tyr-1008 and Tyr-1020. The tract at residues 1016-1098 (SDNDYIIPLP…PLAEAEDSFL (83 aa)) is disordered. Polar residues predominate over residues 1042 to 1059 (SLASSTLNEVNTSSTISC). Over residues 1062–1082 (PLELQEEPQQAEPEAQLEQPQ) the composition is skewed to low complexity.

The protein belongs to the protein kinase superfamily. Tyr protein kinase family. CSF-1/PDGF receptor subfamily. Interacts with homodimeric PDGFB and PDGFD, and with heterodimers formed by PDGFA and PDGFB. May also interact with homodimeric PDGFC. Monomer in the absence of bound ligand. Interaction with homodimeric PDGFB, heterodimers formed by PDGFA and PDGFB or homodimeric PDGFD, leads to receptor dimerization, where both PDGFRA homodimers and heterodimers with PDGFRB are observed. Interacts with SH2B2/APS. Interacts directly (tyrosine phosphorylated) with SHB. Interacts (tyrosine phosphorylated) with PIK3R1 and RASA1. Interacts (tyrosine phosphorylated) with CBL. Interacts (tyrosine phosphorylated) with SRC and SRC family kinases. Interacts (tyrosine phosphorylated) with PIK3C2B, maybe indirectly. Interacts (tyrosine phosphorylated) with SHC1, GRB7, GRB10 and NCK1. Interaction with GRB2 is mediated by SHC1. Interacts (via C-terminus) with NHERF1. Post-translationally, autophosphorylated on tyrosine residues upon ligand binding. Autophosphorylation occurs in trans, i.e. one subunit of the dimeric receptor phosphorylates tyrosine residues on the other subunit. Phosphorylation at Tyr-578, and to a lesser degree, Tyr-580 is important for interaction with SRC. Phosphorylation at Tyr-715 is important for interaction with GRB2. Phosphorylation at Tyr-739 and Tyr-750 is important for interaction with PIK3R1. Phosphorylation at Tyr-750 is important for interaction with NCK1. Phosphorylation at Tyr-770 and Tyr-856 is important for interaction with RASA1/GAP. Phosphorylation at Tyr-856 is important for efficient phosphorylation of PLCG1 and PTPN11, resulting in increased phosphorylation of AKT1, MAPK1/ERK2 and/or MAPK3/ERK1, PDCD6IP/ALIX and STAM, and in increased cell proliferation. Phosphorylation at Tyr-1008 is important for interaction with PTPN11. Phosphorylation at Tyr-1008 and Tyr-1020 is important for interaction with PLCG1. Dephosphorylated by PTPRJ at Tyr-750, Tyr-856, Tyr-1008 and Tyr-1020. Dephosphorylated by PTPN2 at Tyr-578 and Tyr-1020. In terms of processing, N-glycosylated. Ubiquitinated. After autophosphorylation, the receptor is polyubiquitinated, leading to its degradation. Weakly expressed in glomerular mesangial cells and interstitial cells. Up-regulated in areas of renal fibrosis. In mice with unilateral ureteral obstruction, increased expression in interstitial cells at day 4 and expression is markedly elevated at day 7 and is maximal at day 14.

Its subcellular location is the cell membrane. The protein localises to the cytoplasmic vesicle. It is found in the lysosome lumen. The catalysed reaction is L-tyrosyl-[protein] + ATP = O-phospho-L-tyrosyl-[protein] + ADP + H(+). Its activity is regulated as follows. Present in an inactive conformation in the absence of bound ligand. Binding of PDGFB and/or PDGFD leads to dimerization and activation by autophosphorylation on tyrosine residues. Tyrosine-protein kinase that acts as a cell-surface receptor for homodimeric PDGFB and PDGFD and for heterodimers formed by PDGFA and PDGFB, and plays an essential role in the regulation of embryonic development, cell proliferation, survival, differentiation, chemotaxis and migration. Plays an essential role in blood vessel development by promoting proliferation, migration and recruitment of pericytes and smooth muscle cells to endothelial cells. Plays a role in the migration of vascular smooth muscle cells and the formation of neointima at vascular injury sites. Required for normal development of the cardiovascular system. Required for normal recruitment of pericytes (mesangial cells) in the kidney glomerulus, and for normal formation of a branched network of capillaries in kidney glomeruli. Promotes rearrangement of the actin cytoskeleton and the formation of membrane ruffles. Binding of its cognate ligands - homodimeric PDGFB, heterodimers formed by PDGFA and PDGFB or homodimeric PDGFD -leads to the activation of several signaling cascades; the response depends on the nature of the bound ligand and is modulated by the formation of heterodimers between PDGFRA and PDGFRB. Phosphorylates PLCG1, PIK3R1, PTPN11, RASA1/GAP, CBL, SHC1 and NCK1. Activation of PLCG1 leads to the production of the cellular signaling molecules diacylglycerol and inositol 1,4,5-trisphosphate, mobilization of cytosolic Ca(2+) and the activation of protein kinase C. Phosphorylation of PIK3R1, the regulatory subunit of phosphatidylinositol 3-kinase, leads to the activation of the AKT1 signaling pathway. Phosphorylation of SHC1, or of the C-terminus of PTPN11, creates a binding site for GRB2, resulting in the activation of HRAS, RAF1 and down-stream MAP kinases, including MAPK1/ERK2 and/or MAPK3/ERK1. Promotes phosphorylation and activation of SRC family kinases. Promotes phosphorylation of PDCD6IP/ALIX and STAM. Receptor signaling is down-regulated by protein phosphatases that dephosphorylate the receptor and its down-stream effectors, and by rapid internalization of the activated receptor. The chain is Platelet-derived growth factor receptor beta (Pdgfrb) from Mus musculus (Mouse).